The following is a 397-amino-acid chain: S-adenosylmethionine synthase (397 aa).

Histidine 17 contributes to the ATP binding site. A Mg(2+)-binding site is contributed by aspartate 19. Position 45 (glutamate 45) interacts with K(+). The L-methionine site is built by glutamate 58 and glutamine 101. The segment at 101 to 111 (QSPDIAQGVDK) is flexible loop. ATP contacts are provided by residues 176 to 178 (DGK), 243 to 244 (RF), aspartate 252, 258 to 259 (RK), and lysine 279. An L-methionine-binding site is contributed by aspartate 252. Lysine 283 provides a ligand contact to L-methionine.

The protein belongs to the AdoMet synthase family. In terms of assembly, homotetramer; dimer of dimers. Requires Mg(2+) as cofactor. It depends on K(+) as a cofactor.

It is found in the cytoplasm. The enzyme catalyses L-methionine + ATP + H2O = S-adenosyl-L-methionine + phosphate + diphosphate. The protein operates within amino-acid biosynthesis; S-adenosyl-L-methionine biosynthesis; S-adenosyl-L-methionine from L-methionine: step 1/1. In terms of biological role, catalyzes the formation of S-adenosylmethionine (AdoMet) from methionine and ATP. The overall synthetic reaction is composed of two sequential steps, AdoMet formation and the subsequent tripolyphosphate hydrolysis which occurs prior to release of AdoMet from the enzyme. The polypeptide is S-adenosylmethionine synthase (Staphylococcus aureus).